The chain runs to 449 residues: Argininosuccinate synthase (449 aa).

ATP contacts are provided by residues 17 to 25 and Ala-43; that span reads AFSGGLDTS. Tyr-99 serves as a coordination point for L-citrulline. 2 residues coordinate ATP: Gly-129 and Thr-131. L-aspartate is bound by residues Thr-131, Asn-135, and Asp-136. Asn-135 contacts L-citrulline. Position 136 (Asp-136) interacts with ATP. Arg-139 and Ser-192 together coordinate L-citrulline. Asp-194 lines the ATP pocket. L-citrulline-binding residues include Thr-201, Glu-203, and Glu-280.

Belongs to the argininosuccinate synthase family. Type 2 subfamily. In terms of assembly, homotetramer.

It localises to the cytoplasm. It carries out the reaction L-citrulline + L-aspartate + ATP = 2-(N(omega)-L-arginino)succinate + AMP + diphosphate + H(+). Its pathway is amino-acid biosynthesis; L-arginine biosynthesis; L-arginine from L-ornithine and carbamoyl phosphate: step 2/3. The sequence is that of Argininosuccinate synthase from Dickeya dadantii (strain 3937) (Erwinia chrysanthemi (strain 3937)).